A 614-amino-acid polypeptide reads, in one-letter code: tRNA uridine 5-carboxymethylaminomethyl modification enzyme MnmG (614 aa).

Position 10–15 (10–15 (GAGHAG)) interacts with FAD. 271–285 (GPRYCPSIEDKIVKF) contributes to the NAD(+) binding site.

Belongs to the MnmG family. Homodimer. Heterotetramer of two MnmE and two MnmG subunits. Requires FAD as cofactor.

The protein resides in the cytoplasm. Functionally, NAD-binding protein involved in the addition of a carboxymethylaminomethyl (cmnm) group at the wobble position (U34) of certain tRNAs, forming tRNA-cmnm(5)s(2)U34. In Ureaplasma urealyticum serovar 10 (strain ATCC 33699 / Western), this protein is tRNA uridine 5-carboxymethylaminomethyl modification enzyme MnmG.